We begin with the raw amino-acid sequence, 355 residues long: Protein RecA (355 aa).

65–72 (GPESSGKT) provides a ligand contact to ATP. Positions 333–355 (IEEKDEKQAEAEKNENTNLFDEE) are disordered. A compositionally biased stretch (basic and acidic residues) spans 336–347 (KDEKQAEAEKNE).

Belongs to the RecA family.

It is found in the cytoplasm. Functionally, can catalyze the hydrolysis of ATP in the presence of single-stranded DNA, the ATP-dependent uptake of single-stranded DNA by duplex DNA, and the ATP-dependent hybridization of homologous single-stranded DNAs. It interacts with LexA causing its activation and leading to its autocatalytic cleavage. The chain is Protein RecA from Staphylococcus carnosus (strain TM300).